The primary structure comprises 89 residues: Probable Fe(2+)-trafficking protein (89 aa).

This sequence belongs to the Fe(2+)-trafficking protein family.

In terms of biological role, could be a mediator in iron transactions between iron acquisition and iron-requiring processes, such as synthesis and/or repair of Fe-S clusters in biosynthetic enzymes. The chain is Probable Fe(2+)-trafficking protein from Acinetobacter baumannii (strain AB0057).